We begin with the raw amino-acid sequence, 844 residues long: Beta-mannosidase B (844 aa).

Glu-432 functions as the Proton donor in the catalytic mechanism. N-linked (GlcNAc...) asparagine glycosylation occurs at Asn-723.

It belongs to the glycosyl hydrolase 2 family. Beta-mannosidase B subfamily.

It carries out the reaction Hydrolysis of terminal, non-reducing beta-D-mannose residues in beta-D-mannosides.. It participates in glycan metabolism; N-glycan degradation. In terms of biological role, exoglycosidase that cleaves the single beta-linked mannose residue from the non-reducing end of beta-mannosidic oligosaccharides of various complexity and length. Prefers mannobiose over mannotriose and has no activity against polymeric mannan. Is also severely restricted by galactosyl substitutions at the +1 subsite. The polypeptide is Beta-mannosidase B (mndB) (Aspergillus flavus (strain ATCC 200026 / FGSC A1120 / IAM 13836 / NRRL 3357 / JCM 12722 / SRRC 167)).